The chain runs to 77 residues: Acyl carrier protein (77 aa).

The region spanning 1–76 (MATFDDVKAV…DVVNYIDNLK (76 aa)) is the Carrier domain. Position 36 is an O-(pantetheine 4'-phosphoryl)serine (serine 36).

The protein belongs to the acyl carrier protein (ACP) family. In terms of processing, 4'-phosphopantetheine is transferred from CoA to a specific serine of apo-ACP by AcpS. This modification is essential for activity because fatty acids are bound in thioester linkage to the sulfhydryl of the prosthetic group.

It is found in the cytoplasm. The protein operates within lipid metabolism; fatty acid biosynthesis. In terms of biological role, carrier of the growing fatty acid chain in fatty acid biosynthesis. The polypeptide is Acyl carrier protein (Campylobacter jejuni subsp. jejuni serotype O:6 (strain 81116 / NCTC 11828)).